The primary structure comprises 188 residues: Putative manganese efflux pump MntP (188 aa).

The next 6 membrane-spanning stretches (helical) occupy residues 3 to 23 (ISATILLAFGMSMDAFAASIG), 41 to 61 (LIFGAIETLTPLIGWSLGMLA), 62 to 82 (SQFILEWNHWIAFTLLVFLGG), 106 to 128 (WILVTTAIATSLDAMAVGVGLAF), 143 to 163 (ATLIMSTIGMMVGRFIGPLLG), and 168 to 188 (ILGGIVLIGIGGQILWSHFAG).

The protein belongs to the MntP (TC 9.B.29) family.

The protein resides in the cell inner membrane. Functionally, probably functions as a manganese efflux pump. This chain is Putative manganese efflux pump MntP, found in Enterobacter sp. (strain 638).